The sequence spans 534 residues: H(+)/hexose cotransporter 1 (534 aa).

At Met1–Gly21 the chain is on the cytoplasmic side. Residues Gly22–Gly42 traverse the membrane as a helical segment. At Tyr43–Gln87 the chain is on the extracellular side. A helical membrane pass occupies residues Leu88–Thr108. Over Arg109–Lys114 the chain is Cytoplasmic. A helical membrane pass occupies residues Val115–Gln135. Residues Asp136–Arg144 are Extracellular-facing. Residues Val145–Val165 traverse the membrane as a helical segment. Residues Ala166–Met173 are Cytoplasmic-facing. A helical membrane pass occupies residues Leu174–Tyr194. The Extracellular segment spans residues Ala195 to Arg204. The chain crosses the membrane as a helical span at residues Leu205–Pro225. Topologically, residues Glu226 to Gln299 are cytoplasmic. The chain crosses the membrane as a helical span at residues Phe300–Ser322. Residues Ala323–Thr328 lie on the Extracellular side of the membrane. Residues Val329–Phe349 traverse the membrane as a helical segment. Residues Gly350 to Arg352 are Cytoplasmic-facing. The chain crosses the membrane as a helical span at residues Phe353–Leu373. At Ala374–Lys387 the chain is on the extracellular side. A helical transmembrane segment spans residues Ala388–Trp408. Over Gly409–Val433 the chain is Cytoplasmic. The helical transmembrane segment at Val434 to Met454 threads the bilayer. Over Glu455–Tyr456 the chain is Extracellular. The chain crosses the membrane as a helical span at residues Gly457 to Leu477. At Pro478 to Lys534 the chain is on the cytoplasmic side.

It belongs to the major facilitator superfamily. Sugar transporter (TC 2.A.1.1) family.

The protein resides in the membrane. Active uptake of hexoses. This is H(+)/hexose cotransporter 1 (HUP1) from Parachlorella kessleri (Green alga).